The chain runs to 436 residues: GTPase Obg (436 aa).

Residues 2–160 (SMFLDTAKIQ…RELLLELKVL (159 aa)) enclose the Obg domain. One can recognise an OBG-type G domain in the interval 161–338 (ADVGLVGFPS…LLDATAELLD (178 aa)). Residues 167-174 (GFPSVGKS), 192-196 (FTTIV), 214-217 (DLPG), 284-287 (NKMD), and 319-321 (SSL) each bind GTP. Residues serine 174 and threonine 194 each coordinate Mg(2+). The 79-residue stretch at 358–436 (GFDEEAPAFE…IGKFEFEFVD (79 aa)) folds into the OCT domain.

It belongs to the TRAFAC class OBG-HflX-like GTPase superfamily. OBG GTPase family. As to quaternary structure, monomer. It depends on Mg(2+) as a cofactor.

It localises to the cytoplasm. In terms of biological role, an essential GTPase which binds GTP, GDP and possibly (p)ppGpp with moderate affinity, with high nucleotide exchange rates and a fairly low GTP hydrolysis rate. Plays a role in control of the cell cycle, stress response, ribosome biogenesis and in those bacteria that undergo differentiation, in morphogenesis control. The sequence is that of GTPase Obg from Streptococcus gordonii (strain Challis / ATCC 35105 / BCRC 15272 / CH1 / DL1 / V288).